The primary structure comprises 339 residues: Heat-inducible transcription repressor HrcA (339 aa).

The protein belongs to the HrcA family.

Functionally, negative regulator of class I heat shock genes (grpE-dnaK-dnaJ and groELS operons). Prevents heat-shock induction of these operons. The polypeptide is Heat-inducible transcription repressor HrcA (Clostridioides difficile (strain 630) (Peptoclostridium difficile)).